The sequence spans 231 residues: Ribosyldihydronicotinamide dehydrogenase [quinone] (231 aa).

FAD-binding positions include H12, 18-21, and 104-107; these read FNGS and LYWF. 127-129 is a substrate binding site; the sequence is FDV. Residues 148-151 and Y156 each bind FAD; that span reads TTGG. Zn(2+) contacts are provided by H174 and H178. E194 is an FAD binding site. Residue S197 is modified to Phosphoserine. R201 is an FAD binding site. Residue C223 coordinates Zn(2+).

This sequence belongs to the NAD(P)H dehydrogenase (quinone) family. Homodimer. The cofactor is Zn(2+). FAD serves as cofactor.

The protein localises to the cytoplasm. The catalysed reaction is 1-(beta-D-ribofuranosyl)-1,4-dihydronicotinamide + a quinone + H(+) = beta-nicotinamide D-riboside + a quinol. Its function is as follows. The enzyme apparently serves as a quinone reductase in connection with conjugation reactions of hydroquinones involved in detoxification pathways as well as in biosynthetic processes such as the vitamin K-dependent gamma-carboxylation of glutamate residues in prothrombin synthesis. This Rattus norvegicus (Rat) protein is Ribosyldihydronicotinamide dehydrogenase [quinone] (Nqo2).